The primary structure comprises 336 residues: Probable allantoicase (336 aa).

Belongs to the allantoicase family.

The enzyme catalyses allantoate + H2O = (S)-ureidoglycolate + urea. It participates in nitrogen metabolism; (S)-allantoin degradation; (S)-ureidoglycolate from allantoate (aminidohydrolase route): step 1/1. The protein is Probable allantoicase of Acinetobacter baumannii (strain ACICU).